The following is a 430-amino-acid chain: Glutamyl-tRNA reductase (430 aa).

Substrate is bound by residues 50 to 53 (TCNR), S108, 113 to 115 (EPQ), and Q119. C51 acts as the Nucleophile in catalysis. 188 to 193 (GAGEMA) is a binding site for NADP(+).

It belongs to the glutamyl-tRNA reductase family. In terms of assembly, homodimer.

The enzyme catalyses (S)-4-amino-5-oxopentanoate + tRNA(Glu) + NADP(+) = L-glutamyl-tRNA(Glu) + NADPH + H(+). It participates in porphyrin-containing compound metabolism; protoporphyrin-IX biosynthesis; 5-aminolevulinate from L-glutamyl-tRNA(Glu): step 1/2. Catalyzes the NADPH-dependent reduction of glutamyl-tRNA(Glu) to glutamate 1-semialdehyde (GSA). This chain is Glutamyl-tRNA reductase, found in Lawsonia intracellularis (strain PHE/MN1-00).